Consider the following 357-residue polypeptide: Tribbles homolog 3 (357 aa).

The disordered stretch occupies residues 1–63 (MRASPLAVPA…PAPVHAPDVT (63 aa)). The interaction with DDIT3/CHOP stretch occupies residues 1 to 127 (MRASPLAVPA…GHVARPAEVL (127 aa)). Positions 68-316 (LGPYVLLEPE…SGILLHPWLR (249 aa)) constitute a Protein kinase domain. Positions 333–357 (DQVVPEGPGLEEAEEEGERDMGLYG) are disordered. A compositionally biased stretch (acidic residues) spans 341-350 (GLEEAEEEGE).

It belongs to the protein kinase superfamily. CAMK Ser/Thr protein kinase family. Tribbles subfamily. In terms of assembly, interacts with AKT1, AKT2, MAP2K1 and MAP2K7. Interacts with ATF4. Interacts with DDIT3/CHOP and inhibits its interaction with EP300/P300. Interacts with APOBEC3C. Interacts (via N-terminus) with APOBEC3A. Interacts with RELA.

Its subcellular location is the nucleus. Its function is as follows. Inactive protein kinase which acts as a regulator of the integrated stress response (ISR), a process for adaptation to various stress. Inhibits the transcriptional activity of DDIT3/CHOP and is involved in DDIT3/CHOP-dependent cell death during ER stress. May play a role in programmed neuronal cell death but does not appear to affect non-neuronal cells. Acts as a negative feedback regulator of the ATF4-dependent transcription during the ISR: while TRIB3 expression is promoted by ATF4, TRIB3 protein interacts with ATF4 and inhibits ATF4 transcription activity. Disrupts insulin signaling by binding directly to Akt kinases and blocking their activation. May bind directly to and mask the 'Thr-308' phosphorylation site in AKT1. Interacts with the NF-kappa-B transactivator p65 RELA and inhibits its phosphorylation and thus its transcriptional activation activity. Interacts with MAPK kinases and regulates activation of MAP kinases. Can inhibit APOBEC3A editing of nuclear DNA. The chain is Tribbles homolog 3 (TRIB3) from Bos taurus (Bovine).